A 253-amino-acid chain; its full sequence is Aspartic acid-rich protein (253 aa).

The first 22 residues, 1-22 (MYLFIYIFFFFFFFFFFVIVQK), serve as a signal peptide directing secretion. The tract at residues 211–253 (DDFDEEFDDDDDDDDDDDDDDDDDDKDDDLDGDDDGNNDDNDD) is disordered.

It belongs to the nucleosome assembly protein (NAP) family.

The sequence is that of Aspartic acid-rich protein from Plasmodium falciparum (isolate fcm17 / Senegal).